The following is a 131-amino-acid chain: Conotoxin Cal8.2 (131 aa).

An N-terminal signal peptide occupies residues 1–19; sequence MKLLLTLLLGSALMCITLA. The propeptide occupies 20–38; sequence DECGLGTHRPVKEVIDNVR.

In terms of processing, contains 4 disulfide bonds. In terms of tissue distribution, expressed by the venom duct.

The protein localises to the secreted. In terms of biological role, probable neurotoxin with unknown target. Possibly targets ion channels. The sequence is that of Conotoxin Cal8.2 from Californiconus californicus (California cone).